The following is a 63-amino-acid chain: Hyphancin-3E (63 aa).

The signal sequence occupies residues 1 to 22 (MNFSRILFFVFTCFVALASVSG). Residues 23–26 (APEP) constitute a propeptide, removed by a dipeptidylpeptidase. The residue at position 61 (Leu-61) is a Leucine amide.

The protein belongs to the cecropin family.

The protein localises to the secreted. Has antibacterial activity. This chain is Hyphancin-3E, found in Hyphantria cunea (Fall webworm moth).